The following is a 443-amino-acid chain: MARIPLEFLSITLPVLLLAYCLAIEYEVSLPTIAHTSPASNPEEYLQSIYEQLNLDLPSTCTVNHLSAFDNTPTSLLNFSTSPVEHFDAPKLPSGLNATAGEQWAFDGTSSSGRSGLLLGIYRDASYAFLGPGNFRLSLDLVWDNSTTWSTVDYLSSSTVHTCTDKVVGIWSHSADHYYVFTVTADAKHARIHFHTPDVVGAVDLYSTTPARYPDGALFPSEVSVTQNAPMLHWVEPIPGGLIDVDLKVKDTPFRWTGLGGHERWWSAKGWLDLMTHWEAVRLMAGPYVLSFWQPTSRVNGVAYPSAFLTKYGEKVFSAVSGKVSEVEDYILYSPVRMEKQARETGYEVELVSPAQGRRWVFGLEYRNQEFEFELGDAAGGRAYVGRAKGGEVHADDKPEEPSEGVFFIEHVDVKALTVPRAYVVVSFEFGPPIHGADIWVAC.

The first 23 residues, 1-23, serve as a signal peptide directing secretion; sequence MARIPLEFLSITLPVLLLAYCLA. N-linked (GlcNAc...) asparagine glycans are attached at residues Asn78, Asn97, and Asn145.

It belongs to the Diels-Alderase family.

It functions in the pathway secondary metabolite biosynthesis. Functionally, diels-Alderase; part of the gene cluster that mediates the biosynthesis of oxaleimides, cytotoxic compounds containing an unusual disubstituted succinimide moiety. The first step of the pathway is provided by the HR-PKS poxF that serves in a new mode of collaborative biosynthesis with the PKS-NRPS poxE, by providing the olefin containing amino acid substrate via the synthesis of an ACP-bound dec-4-enoate. The cytochrome P450 monooxygenase poxM-catalyzed oxidation at the alpha-position creates the enzyme-bound 2-hydroxydec-4-enoyl-ACP thioester, which may be prone to spontaneous hydrolysis to yield 2-hydroxydec-4-enoic acid due to increased electrophilicity of the carbonyl. 2-hydroxydec-4-enoic acid can then be further oxidized by poxM to yield the alpha-ketoacid 2-oxodec-4-enoicacid, which is reductively aminated by the aminotransferase poxL to yield (S,E)-2-aminodec-4-enoic acid. The Hybrid PKS-NRPS synthetase poxE then performs condensation between the octaketide product of its PKS modules and the amino group of (S,E)-2-aminodec-4-enoic acid which is activated and incorporated by the adenylation domain. The resulting aminoacyl product can be cyclized by the Diels-Alderase PoxQ and reductively released by the reductive (R) domain of poxE to yield an aldehyde intermediate. The released aldehyde is then substrate for a Knoevenagel condensation by the hydrolyase poxO followed by an oxidation at the 5-position of the pyrrolidone ring. The presence of the olefin from the amino acid building block allows for migration of the substituted allyl group to occur. This allylic transposition reaction takes place in a conjugate addition, semipinacol-like fashion to yield a succinimide intermediate. Iterative two-electron oxidations of the C7 methyl of the succinimide intermediate to the carboxylic acid can be catalyzed by one of two remaining cytochrome P450 monooxygenasess poxC or poxD to yield oxaleimide A. Subsequent oxidation yields the maleimide scaffold oxaleimide I. Both oxaleimide A and oxaleimide I can undergo oxidative modifications in the decalin ring to yield the series of products oxaleimides B to H. This Penicillium oxalicum (strain 114-2 / CGMCC 5302) (Penicillium decumbens) protein is Diels-Alderase poxQ.